A 184-amino-acid chain; its full sequence is Ribosome-recycling factor (184 aa).

It belongs to the RRF family.

The protein localises to the cytoplasm. In terms of biological role, responsible for the release of ribosomes from messenger RNA at the termination of protein biosynthesis. May increase the efficiency of translation by recycling ribosomes from one round of translation to another. In Stenotrophomonas maltophilia (strain R551-3), this protein is Ribosome-recycling factor.